We begin with the raw amino-acid sequence, 121 residues long: Chromosome transmission fidelity protein 8 homolog (121 aa).

It belongs to the CTF8 family. As to quaternary structure, component of the CTF18-RFC complex, which consists of CTF18, CTF8, DSCC1, RFC2, RFC3, RFC4 and RFC5. The CTF18-RFC complex does not interact with the Rad9/Rad1/Hus1 complex. The CTF18-RFC complex interacts with POLH. CTF18/CTF8/DSCC1 associate with PCNA. CTF8 exists as a dimer with DSCC1.

The protein localises to the nucleus. In terms of biological role, chromosome cohesion factor involved in sister chromatid cohesion and fidelity of chromosome transmission. Component of one of the cell nuclear antigen loader complexes, CTF18-replication factor C (CTF18-RFC), which consists of CTF18, CTF8, DSCC1, RFC2, RFC3, RFC4 and RFC5. The CTF18-RFC complex binds to single-stranded and primed DNAs and has weak ATPase activity that is stimulated the presence of primed DNA, replication protein A (RPA) and proliferating cell nuclear antigen (PCNA). The CTF18-RFC complex catalyzes the ATP-dependent loading of PCNA onto primed and gapped DNA. It also interacts with and stimulates POLH, which is suggestive of a protein network that coordinates DNA repair, recombination and chromosome cohesion reactions with replication fork progression. This is Chromosome transmission fidelity protein 8 homolog from Homo sapiens (Human).